The chain runs to 1074 residues: Insulin receptor substrate 2-A (1074 aa).

A disordered region spans residues 1–64 (MAGVLCPTEE…PPASAAEDDV (64 aa)). 2 consecutive short sequence motifs (YXXM motif) follow at residues 33-36 (YRRM) and 145-148 (YFAM). A PH domain is found at 63 to 168 (DVRKRGYLRK…WYQALSELIN (106 aa)). In terms of domain architecture, IRS-type PTB spans 193 to 297 (FKEVWQVNVK…DTMKALKAYS (105 aa)). Disordered stretches follow at residues 326-370 (PPSQ…RPFR), 426-461 (CSSSGHGSASETLTRPSSSSVCGSPSDGGFISSDEY), and 475-510 (SNTPDSLGNTPPIQEENTLSDYMSMSTHSQPDSRDD). The span at 347–361 (SAKNNSFRFRTSSEG) shows a compositional bias: polar residues. Composition is skewed to low complexity over residues 426–435 (CSSSGHGSAS) and 442–454 (SSSSVCGSPSDGG). Over residues 475 to 504 (SNTPDSLGNTPPIQEENTLSDYMSMSTHSQ) the composition is skewed to polar residues. 6 consecutive short sequence motifs (YXXM motif) follow at residues 496 to 499 (YMSM), 592 to 595 (YMPM), 605 to 608 (YLPM), 631 to 634 (YMMM), 663 to 666 (YMDM), and 710 to 713 (YVPM). The segment at 801–821 (TPYSLSADGSPSSLGSSCDHR) is disordered. A compositionally biased stretch (low complexity) spans 804-817 (SLSADGSPSSLGSS). A YXXM motif 9 motif is present at residues 888–891 (YTTM).

Post-translationally, phosphorylated by INSR.

Functionally, potentiates insulin signaling. The chain is Insulin receptor substrate 2-A (irs2-a) from Xenopus laevis (African clawed frog).